A 354-amino-acid polypeptide reads, in one-letter code: MRFDLEPPSSVAAAHRIGVLLINLGTPDAPTPRAVRRYLAEFLSDPRVVEIPQAIWQVLLRTVILPLRGRASAKKYAAVWMPEGSPLRVYTERQTEGVRHLLAANDYQVQVDYAMRYGSPNIAQALAQFKRAGVERVLLMPMYPQYSASTTATAFDAAFAALTRMRNQPEVRTVRHYADHPAYIHALAEQVRHYWAQHGRPDFAAGDKLVLSFHGVPKRTLDLGDPYHDQCQQTGALLMAALGLSTLECRVTFQSRFGKAEWLQPYTAPTLRELGEAGVRRADVFCPGFTADCLETIEEIGMEVRDEFLAGGGQAFHRIPCLNGASAWIGALGEIVAENLQGWPAKAAQPETVS.

Fe cation contacts are provided by His214 and Glu295.

It belongs to the ferrochelatase family.

The protein resides in the cytoplasm. The catalysed reaction is heme b + 2 H(+) = protoporphyrin IX + Fe(2+). The protein operates within porphyrin-containing compound metabolism; protoheme biosynthesis; protoheme from protoporphyrin-IX: step 1/1. Functionally, catalyzes the ferrous insertion into protoporphyrin IX. This chain is Ferrochelatase, found in Burkholderia vietnamiensis (strain G4 / LMG 22486) (Burkholderia cepacia (strain R1808)).